We begin with the raw amino-acid sequence, 324 residues long: Rho crystallin (324 aa).

T2 is subject to N-acetylthreonine. 218–281 (SVLGSHRDRN…SFTPARIKQN (64 aa)) is a binding site for NADP(+).

Belongs to the aldo/keto reductase family. In terms of assembly, monomer.

This chain is Rho crystallin, found in Aquarana catesbeiana (American bullfrog).